The sequence spans 448 residues: ATP-dependent RNA helicase sub2 (448 aa).

Positions 19-29 (DAAATTAAPAA) are enriched in low complexity. Residues 19 to 43 (DAAATTAAPAANGAQDKKGDLTVSG) are disordered. Residues 58–86 (TGFRDFLLKGELLRAITDCGFEHPSEVQQ) carry the Q motif motif. The 183-residue stretch at 89-271 (IPTAILNVDV…KKFMRNPLEV (183 aa)) folds into the Helicase ATP-binding domain. 102–109 (AKSGLGKT) provides a ligand contact to ATP. Positions 211 to 214 (DECD) match the DECD box motif. Residues 283–444 (GLQQYYIKLS…EYPEGGVDSS (162 aa)) form the Helicase C-terminal domain.

Belongs to the DEAD box helicase family. DECD subfamily.

It localises to the nucleus. The enzyme catalyses ATP + H2O = ADP + phosphate + H(+). Functionally, ATP-binding RNA helicase involved in transcription elongation and required for the export of mRNA out of the nucleus. SUB2 also plays a role in pre-mRNA splicing and spliceosome assembly. May be involved in rDNA and telomeric silencing, and maintenance of genome integrity. This is ATP-dependent RNA helicase sub2 (sub2) from Aspergillus fumigatus (strain ATCC MYA-4609 / CBS 101355 / FGSC A1100 / Af293) (Neosartorya fumigata).